The chain runs to 121 residues: Small ribosomal subunit protein eS24 (121 aa).

Belongs to the eukaryotic ribosomal protein eS24 family.

This chain is Small ribosomal subunit protein eS24, found in Pyrobaculum aerophilum (strain ATCC 51768 / DSM 7523 / JCM 9630 / CIP 104966 / NBRC 100827 / IM2).